A 574-amino-acid polypeptide reads, in one-letter code: Ankyrin repeat protein B18 (574 aa).

ANK repeat units lie at residues 56 to 87 (TGYTALHCYLYNNYFTNDVLKILLNHGVDVTM), 135 to 164 (IKSRYMLLKEEDIDENIVSTLLDKGIDPNF), 167 to 213 (DGYT…NLNA), 217 to 249 (CGNTPFHLYLSIEMCNNIHMTKMLLTFNPNFKI), 253 to 285 (HGLTPILCYITSDYIQHDILVMLIHHYETNVGE), and 327 to 356 (EGKTLLHVACEYNNTHVIDYLIRINGDINA). The 34-residue stretch at 541 to 574 (NCLLTLLPSEIIYEILYMLTINDLYNISYPPTKV) folds into the F-box domain.

This chain is Ankyrin repeat protein B18, found in Vaccinia virus (strain Ankara) (VACV).